The chain runs to 64 residues: Large ribosomal subunit protein bL35 (64 aa).

The segment at 1 to 21 (MPKMKTNRGAAKRFKVKKSGK) is disordered. Residues 10–21 (AAKRFKVKKSGK) are compositionally biased toward basic residues.

It belongs to the bacterial ribosomal protein bL35 family.

The protein is Large ribosomal subunit protein bL35 of Nautilia profundicola (strain ATCC BAA-1463 / DSM 18972 / AmH).